A 504-amino-acid polypeptide reads, in one-letter code: Histidine--tRNA ligase (504 aa).

The protein belongs to the class-II aminoacyl-tRNA synthetase family. Homodimer.

It localises to the cytoplasm. The enzyme catalyses tRNA(His) + L-histidine + ATP = L-histidyl-tRNA(His) + AMP + diphosphate + H(+). The chain is Histidine--tRNA ligase from Rhizobium rhizogenes (strain K84 / ATCC BAA-868) (Agrobacterium radiobacter).